Consider the following 148-residue polypeptide: Large ribosomal subunit protein bL9 (148 aa).

Belongs to the bacterial ribosomal protein bL9 family.

In terms of biological role, binds to the 23S rRNA. The chain is Large ribosomal subunit protein bL9 from Marinobacter nauticus (strain ATCC 700491 / DSM 11845 / VT8) (Marinobacter aquaeolei).